Reading from the N-terminus, the 680-residue chain is 1-deoxy-D-xylulose-5-phosphate synthase (680 aa).

Residues H113 and 154–156 (GHS) each bind thiamine diphosphate. Residue D185 participates in Mg(2+) binding. Residues 186 to 187 (GA), N214, F323, and E408 each bind thiamine diphosphate. N214 lines the Mg(2+) pocket.

It belongs to the transketolase family. DXPS subfamily. In terms of assembly, homodimer. It depends on Mg(2+) as a cofactor. Thiamine diphosphate is required as a cofactor.

The enzyme catalyses D-glyceraldehyde 3-phosphate + pyruvate + H(+) = 1-deoxy-D-xylulose 5-phosphate + CO2. It functions in the pathway metabolic intermediate biosynthesis; 1-deoxy-D-xylulose 5-phosphate biosynthesis; 1-deoxy-D-xylulose 5-phosphate from D-glyceraldehyde 3-phosphate and pyruvate: step 1/1. Its function is as follows. Catalyzes the acyloin condensation reaction between C atoms 2 and 3 of pyruvate and glyceraldehyde 3-phosphate to yield 1-deoxy-D-xylulose-5-phosphate (DXP). In Psychrobacter arcticus (strain DSM 17307 / VKM B-2377 / 273-4), this protein is 1-deoxy-D-xylulose-5-phosphate synthase.